A 459-amino-acid polypeptide reads, in one-letter code: Protein FAM90A27P (459 aa).

Over residues 1-10 (MARHSVHHQA) the composition is skewed to basic residues. Disordered stretches follow at residues 1 to 41 (MARH…ESRV), 74 to 136 (SHKE…WKEP), 153 to 239 (HTTK…ALQP), and 259 to 459 (PDAD…SDSD). A compositionally biased stretch (basic and acidic residues) spans 125–136 (PQEKMQEAWKEP). The span at 184-194 (HNDSPQLSTCG) shows a compositional bias: polar residues. The span at 341–353 (KATAETAATKTAT) shows a compositional bias: low complexity. A compositionally biased stretch (polar residues) spans 415–427 (PPENSASAQSPRF).

The protein belongs to the FAM90 family.

The polypeptide is Protein FAM90A27P (FAM90A27P) (Homo sapiens (Human)).